The primary structure comprises 422 residues: Glucose-1-phosphate adenylyltransferase 2 (422 aa).

Alpha-D-glucose 1-phosphate-binding positions include Y110, G175, 190 to 191 (EK), and S208.

The protein belongs to the bacterial/plant glucose-1-phosphate adenylyltransferase family. As to quaternary structure, homotetramer.

The enzyme catalyses alpha-D-glucose 1-phosphate + ATP + H(+) = ADP-alpha-D-glucose + diphosphate. Its pathway is glycan biosynthesis; glycogen biosynthesis. Involved in the biosynthesis of ADP-glucose, a building block required for the elongation reactions to produce glycogen. Catalyzes the reaction between ATP and alpha-D-glucose 1-phosphate (G1P) to produce pyrophosphate and ADP-Glc. This chain is Glucose-1-phosphate adenylyltransferase 2, found in Alkalilimnicola ehrlichii (strain ATCC BAA-1101 / DSM 17681 / MLHE-1).